Consider the following 369-residue polypeptide: Glutamate 5-kinase (369 aa).

K8 serves as a coordination point for ATP. The substrate site is built by S49, D136, and N148. ATP contacts are provided by residues 168–169 (TD) and 211–217 (TGGMATK). One can recognise a PUA domain in the interval 276–354 (TGKLYLDSGA…DEISQILGYG (79 aa)).

It belongs to the glutamate 5-kinase family.

It localises to the cytoplasm. It catalyses the reaction L-glutamate + ATP = L-glutamyl 5-phosphate + ADP. The protein operates within amino-acid biosynthesis; L-proline biosynthesis; L-glutamate 5-semialdehyde from L-glutamate: step 1/2. In terms of biological role, catalyzes the transfer of a phosphate group to glutamate to form L-glutamate 5-phosphate. The chain is Glutamate 5-kinase from Rippkaea orientalis (strain PCC 8801 / RF-1) (Cyanothece sp. (strain PCC 8801)).